Reading from the N-terminus, the 810-residue chain is Zinc finger CCCH domain-containing protein 11A (810 aa).

3 consecutive C3H1-type zinc fingers follow at residues 2–29 (PNQG…HCEA), 31–57 (IGNE…HMEI), and 60–86 (KRSE…HHNR). Phosphoserine is present on Ser108. Residues Lys114 and Lys124 each participate in a glycyl lysine isopeptide (Lys-Gly) (interchain with G-Cter in SUMO2) cross-link. Position 132 is a phosphoserine (Ser132). Disordered stretches follow at residues 139-194 (MKVE…GLRV), 223-258 (KKMK…ENVR), 285-351 (GKRK…DKVN), and 367-432 (ERAS…TTCI). Lys140 is covalently cross-linked (Glycyl lysine isopeptide (Lys-Gly) (interchain with G-Cter in SUMO2)). Phosphoserine is present on residues Ser149 and Ser171. Acidic residues predominate over residues 160-175 (ADDDEDDDDQFSEEGD). Ser290 carries the post-translational modification Phosphoserine. Basic and acidic residues-rich tracts occupy residues 309-322 (KKVE…DKTP) and 367-390 (ERAS…KTDD). A Phosphothreonine modification is found at Thr321. Residues 362-423 (EEILLERASQ…KHRQQEAERQ (62 aa)) adopt a coiled-coil conformation. Phosphoserine is present on Ser370. A compositionally biased stretch (polar residues) spans 391 to 402 (STSGARSSSTIR). Positions 417 to 432 (QQEAERQKSKKDTTCI) are enriched in basic and acidic residues. A Glycyl lysine isopeptide (Lys-Gly) (interchain with G-Cter in SUMO2) cross-link involves residue Lys478. The interval 482–549 (ALRVQQSSES…KEASGETTGV (68 aa)) is disordered. Residues 486-498 (QQSSESSTSSPSQ) show a composition bias toward low complexity. Lys619 participates in a covalent cross-link: Glycyl lysine isopeptide (Lys-Gly) (interchain with G-Cter in SUMO2). The disordered stretch occupies residues 715–768 (TVPEAENPRDSLVLPPTQSSSDSSPPEVSGPSSSQMSMKTRRLSSASTGKPPLS). The segment covering 729–748 (PPTQSSSDSSPPEVSGPSSS) has biased composition (low complexity). Residues 749–762 (QMSMKTRRLSSAST) are compositionally biased toward polar residues.

Interacts with TREX complex components THOC2, DDX39 and POLDIP3; the interactions are ATP-dependent. Interacts with PABPN1; this interaction retains ZC3H11A in nuclear speckles. Interacts with KPNA3.

It is found in the nucleus. Its subcellular location is the nucleus speckle. Functionally, through its association with TREX complex components, may participate in the export and post-transcriptional coordination of selected mRNA transcripts, including those required to maintain the metabolic processes in embryonic cells. Binds RNA. Its function is as follows. (Microbial infection) Plays a role in efficient growth of several nuclear-replicating viruses such as HIV-1, influenza virus or herpes simplex virus 1/HHV-1. Required for efficient viral mRNA export. May be required for proper polyadenylation of adenovirus type 5/HAdV-5 capsid mRNA. The polypeptide is Zinc finger CCCH domain-containing protein 11A (ZC3H11A) (Homo sapiens (Human)).